The primary structure comprises 150 residues: Transcriptional regulator MraZ (150 aa).

2 SpoVT-AbrB domains span residues 6–52 and 80–126; these read EFFN…PYQE and AVEC…NRTK.

This sequence belongs to the MraZ family. As to quaternary structure, forms oligomers.

It is found in the cytoplasm. The protein localises to the nucleoid. The sequence is that of Transcriptional regulator MraZ from Syntrophotalea carbinolica (strain DSM 2380 / NBRC 103641 / GraBd1) (Pelobacter carbinolicus).